The following is a 598-amino-acid chain: Elongation factor 4 (598 aa).

The tr-type G domain occupies 4 to 186; sequence SHIRNFAIIA…AIVSRLPAPS (183 aa). GTP is bound by residues 16–21 and 133–136; these read DHGKST and NKID.

This sequence belongs to the TRAFAC class translation factor GTPase superfamily. Classic translation factor GTPase family. LepA subfamily.

Its subcellular location is the cell inner membrane. It carries out the reaction GTP + H2O = GDP + phosphate + H(+). Its function is as follows. Required for accurate and efficient protein synthesis under certain stress conditions. May act as a fidelity factor of the translation reaction, by catalyzing a one-codon backward translocation of tRNAs on improperly translocated ribosomes. Back-translocation proceeds from a post-translocation (POST) complex to a pre-translocation (PRE) complex, thus giving elongation factor G a second chance to translocate the tRNAs correctly. Binds to ribosomes in a GTP-dependent manner. This is Elongation factor 4 from Ehrlichia chaffeensis (strain ATCC CRL-10679 / Arkansas).